The chain runs to 392 residues: Succinate--CoA ligase [ADP-forming] subunit beta (392 aa).

The ATP-grasp domain occupies Lys-9–Lys-248. ATP-binding positions include Lys-50, Gly-57–Gly-59, Val-106, and Glu-111. Mg(2+)-binding residues include Asn-203 and Asp-217. Substrate-binding positions include Asn-268 and Gly-325–Val-327.

The protein belongs to the succinate/malate CoA ligase beta subunit family. As to quaternary structure, heterotetramer of two alpha and two beta subunits. Requires Mg(2+) as cofactor.

It catalyses the reaction succinate + ATP + CoA = succinyl-CoA + ADP + phosphate. The catalysed reaction is GTP + succinate + CoA = succinyl-CoA + GDP + phosphate. Its pathway is carbohydrate metabolism; tricarboxylic acid cycle; succinate from succinyl-CoA (ligase route): step 1/1. Functionally, succinyl-CoA synthetase functions in the citric acid cycle (TCA), coupling the hydrolysis of succinyl-CoA to the synthesis of either ATP or GTP and thus represents the only step of substrate-level phosphorylation in the TCA. The beta subunit provides nucleotide specificity of the enzyme and binds the substrate succinate, while the binding sites for coenzyme A and phosphate are found in the alpha subunit. The chain is Succinate--CoA ligase [ADP-forming] subunit beta from Salinibacter ruber (strain DSM 13855 / M31).